The chain runs to 317 residues: L-lactate dehydrogenase (317 aa).

NAD(+)-binding residues include Val16, Asp37, and Tyr69. Substrate-binding positions include Gln86, Arg92, and 124–127; that span reads NPVD. Residues 122 to 124 and Ser147 contribute to the NAD(+) site; that span reads ASN. 152–155 provides a ligand contact to substrate; sequence DSAR. The active-site Proton acceptor is the His179. Tyr223 carries the phosphotyrosine modification. Thr232 serves as a coordination point for substrate.

It belongs to the LDH/MDH superfamily. LDH family. Homotetramer.

Its subcellular location is the cytoplasm. It carries out the reaction (S)-lactate + NAD(+) = pyruvate + NADH + H(+). It functions in the pathway fermentation; pyruvate fermentation to lactate; (S)-lactate from pyruvate: step 1/1. Catalyzes the conversion of lactate to pyruvate. In Mycoplasma capricolum subsp. capricolum (strain California kid / ATCC 27343 / NCTC 10154), this protein is L-lactate dehydrogenase.